We begin with the raw amino-acid sequence, 191 residues long: Large ribosomal subunit protein bL9c (191 aa).

The transit peptide at 1-35 (MASPSCASTLPWTAAAFSYPRRLQTRRAPSLVIVA) directs the protein to the chloroplast.

The protein belongs to the bacterial ribosomal protein bL9 family. Part of the 50S ribosomal subunit.

The protein resides in the plastid. It localises to the chloroplast. Its function is as follows. Binds to the 23S rRNA. The chain is Large ribosomal subunit protein bL9c (RPL9) from Triticum aestivum (Wheat).